The chain runs to 272 residues: Putative pyruvate, phosphate dikinase regulatory protein 2 (272 aa).

154 to 161 provides a ligand contact to ADP; the sequence is GVSRTSKT.

This sequence belongs to the pyruvate, phosphate/water dikinase regulatory protein family. PDRP subfamily.

The catalysed reaction is N(tele)-phospho-L-histidyl/L-threonyl-[pyruvate, phosphate dikinase] + ADP = N(tele)-phospho-L-histidyl/O-phospho-L-threonyl-[pyruvate, phosphate dikinase] + AMP + H(+). It catalyses the reaction N(tele)-phospho-L-histidyl/O-phospho-L-threonyl-[pyruvate, phosphate dikinase] + phosphate + H(+) = N(tele)-phospho-L-histidyl/L-threonyl-[pyruvate, phosphate dikinase] + diphosphate. Its function is as follows. Bifunctional serine/threonine kinase and phosphorylase involved in the regulation of the pyruvate, phosphate dikinase (PPDK) by catalyzing its phosphorylation/dephosphorylation. In Staphylococcus epidermidis (strain ATCC 35984 / DSM 28319 / BCRC 17069 / CCUG 31568 / BM 3577 / RP62A), this protein is Putative pyruvate, phosphate dikinase regulatory protein 2.